The following is a 322-amino-acid chain: Pyridoxal kinase (322 aa).

Position 1 is an N-acetylmethionine (methionine 1). Pyridoxal is bound by residues serine 22 and threonine 57. Threonine 57 is a binding site for pyridoxal 5'-phosphate. At serine 69 the chain carries Phosphoserine. ATP is bound at residue aspartate 123. Aspartate 123 serves as a coordination point for Na(+). Aspartate 128 contacts Mg(2+). A Na(+)-binding site is contributed by threonine 158. Residue 160 to 163 participates in ATP binding; the sequence is NQFE. A Phosphoserine modification is found at serine 174. Threonine 196 is a binding site for Na(+). Residue 196 to 197 coordinates ATP; the sequence is TS. Serine 223 bears the Phosphoserine mark. Residues 236–238 and threonine 243 each bind ATP; that span reads VDA. Residue 244 to 245 coordinates pyridoxal 5'-phosphate; the sequence is GD. Aspartate 245 serves as the catalytic Proton acceptor. Position 295 is a phosphoserine (serine 295).

Belongs to the pyridoxine kinase family. Homodimer. It depends on Zn(2+) as a cofactor. Mg(2+) is required as a cofactor. The N-terminus is blocked.

The protein localises to the cytoplasm. It is found in the cytosol. The enzyme catalyses pyridoxal + ATP = pyridoxal 5'-phosphate + ADP + H(+). It carries out the reaction pyridoxamine + ATP = pyridoxamine 5'-phosphate + ADP + H(+). It catalyses the reaction pyridoxine + ATP = pyridoxine 5'-phosphate + ADP + H(+). Its pathway is cofactor metabolism; pyridoxal 5'-phosphate salvage; pyridoxal 5'-phosphate from pyridoxal: step 1/1. It functions in the pathway cofactor metabolism; pyridoxal 5'-phosphate salvage; pyridoxine 5'-phosphate from pyridoxine: step 1/1. The protein operates within cofactor metabolism; pyridoxal 5'-phosphate salvage; pyridoxamine 5'-phosphate from pyridoxamine: step 1/1. Its activity is regulated as follows. Activity is increased in the presence of K(+)or Na(+). Its function is as follows. Catalyzes the phosphorylation of the dietary vitamin B6 vitamers pyridoxal (PL), pyridoxine (PN) and pyridoxamine (PM) to form pyridoxal 5'-phosphate (PLP), pyridoxine 5'-phosphate (PNP) and pyridoxamine 5'-phosphate (PMP), respectively. PLP is the active form of vitamin B6, and acts as a cofactor for over 140 different enzymatic reactions. This is Pyridoxal kinase (PDXK) from Sus scrofa (Pig).